The sequence spans 670 residues: Eukaryotic translation initiation factor 3 subunit B (670 aa).

An RRM domain is found at 30–116 (KFIVVDNIPV…HTLKVNLLDD (87 aa)). 4 WD repeats span residues 183-221 (SVSLTSSYVQWSNTGSYLVTFHPDGIALYGGKDWIQVNL), 222-269 (FEHR…KLRS), 466-507 (LENR…SYGT), and 509-553 (EHLQ…VYSV). Residues 568–600 (KFMLTNKEINQIKQNIKKYQEKFDKQDEDDNKA) are a coiled coil.

The protein belongs to the eIF-3 subunit B family. As to quaternary structure, component of the eukaryotic translation initiation factor 3 (eIF-3) complex.

It is found in the cytoplasm. RNA-binding component of the eukaryotic translation initiation factor 3 (eIF-3) complex, which is involved in protein synthesis of a specialized repertoire of mRNAs and, together with other initiation factors, stimulates binding of mRNA and methionyl-tRNAi to the 40S ribosome. The eIF-3 complex specifically targets and initiates translation of a subset of mRNAs involved in cell proliferation. This chain is Eukaryotic translation initiation factor 3 subunit B (eif3B), found in Dictyostelium discoideum (Social amoeba).